A 235-amino-acid chain; its full sequence is NAD(P)H-hydrate epimerase (235 aa).

The region spanning 18–221 (AAQIDEQLFT…SLVDEHELLM (204 aa)) is the YjeF N-terminal domain. Residue 65–69 (NNGGD) coordinates (6S)-NADPHX. K(+) contacts are provided by Asn-66 and Asp-127. (6S)-NADPHX-binding positions include 131 to 137 (GFSFHPP) and Asp-160. A K(+)-binding site is contributed by Ser-163.

The protein belongs to the NnrE/AIBP family. Requires K(+) as cofactor.

The catalysed reaction is (6R)-NADHX = (6S)-NADHX. It carries out the reaction (6R)-NADPHX = (6S)-NADPHX. In terms of biological role, catalyzes the epimerization of the S- and R-forms of NAD(P)HX, a damaged form of NAD(P)H that is a result of enzymatic or heat-dependent hydration. This is a prerequisite for the S-specific NAD(P)H-hydrate dehydratase to allow the repair of both epimers of NAD(P)HX. The polypeptide is NAD(P)H-hydrate epimerase (Caenorhabditis elegans).